The sequence spans 267 residues: Probable ribosomal RNA small subunit methyltransferase A (267 aa).

Residues Leu12, Gly37, Glu58, Asp83, and Asn100 each coordinate S-adenosyl-L-methionine.

This sequence belongs to the class I-like SAM-binding methyltransferase superfamily. rRNA adenine N(6)-methyltransferase family. RsmA subfamily.

It is found in the cytoplasm. Functionally, specifically dimethylates two adjacent adenosines in the loop of a conserved hairpin near the 3'-end of 16S rRNA in the 30S particle. May play a critical role in biogenesis of 30S subunits. This Methanococcus vannielii (strain ATCC 35089 / DSM 1224 / JCM 13029 / OCM 148 / SB) protein is Probable ribosomal RNA small subunit methyltransferase A.